We begin with the raw amino-acid sequence, 135 residues long: Interleukin-4 (135 aa).

An N-terminal signal peptide occupies residues 1–24 (MGLTYQLIPVLVCLLVCTSHFVHG). 3 disulfides stabilise this stretch: Cys-27–Cys-135, Cys-48–Cys-85, and Cys-70–Cys-105. An N-linked (GlcNAc...) asparagine glycan is attached at Asn-62.

It belongs to the IL-4/IL-13 family.

The protein localises to the secreted. In terms of biological role, participates in at least several B-cell activation processes as well as of other cell types. It is a costimulator of DNA-synthesis. It induces the expression of class II MHC molecules on resting B-cells. It enhances both secretion and cell surface expression of IgE and IgG1. It also regulates the expression of the low affinity Fc receptor for IgE (CD23) on both lymphocytes and monocytes. Positively regulates IL31RA expression in macrophages. Stimulates autophagy in dendritic cells by interfering with mTORC1 signaling and through the induction of RUFY4. The protein is Interleukin-4 (IL4) of Bubalus carabanensis (Swamp type water buffalo).